A 185-amino-acid polypeptide reads, in one-letter code: Peptide deformylase (185 aa).

The Fe cation site is built by C112 and H155. The active site involves E156. Residue H159 participates in Fe cation binding.

It belongs to the polypeptide deformylase family. Fe(2+) is required as a cofactor.

The catalysed reaction is N-terminal N-formyl-L-methionyl-[peptide] + H2O = N-terminal L-methionyl-[peptide] + formate. Functionally, removes the formyl group from the N-terminal Met of newly synthesized proteins. Requires at least a dipeptide for an efficient rate of reaction. N-terminal L-methionine is a prerequisite for activity but the enzyme has broad specificity at other positions. This chain is Peptide deformylase, found in Latilactobacillus sakei subsp. sakei (strain 23K) (Lactobacillus sakei subsp. sakei).